A 401-amino-acid polypeptide reads, in one-letter code: S-adenosylmethionine synthase (401 aa).

137–142 (GQGSGD) lines the ATP pocket.

It belongs to the AdoMet synthase 2 family. It depends on Mg(2+) as a cofactor.

It carries out the reaction L-methionine + ATP + H2O = S-adenosyl-L-methionine + phosphate + diphosphate. The protein operates within amino-acid biosynthesis; S-adenosyl-L-methionine biosynthesis; S-adenosyl-L-methionine from L-methionine: step 1/1. Catalyzes the formation of S-adenosylmethionine from methionine and ATP. The chain is S-adenosylmethionine synthase from Haloquadratum walsbyi (strain DSM 16790 / HBSQ001).